A 303-amino-acid chain; its full sequence is Small ribosomal subunit protein uS2 (303 aa).

Positions 267–303 (AESLSMAEEPAPPSQRKGPASETAEPVAEPAVTESGS) are disordered.

The protein belongs to the universal ribosomal protein uS2 family.

The chain is Small ribosomal subunit protein uS2 from Solibacter usitatus (strain Ellin6076).